The sequence spans 241 residues: MDVSWDADNFEPKLPTTLAASNKWEGEDEDDNVKESWEDEEEEKKDEEKTEAAPPPQPKPKKKIHDKIAERERQEREKAERLVTEKTAEEMTPEQKLAEKLRQQKLQEESDLRLAMETFGVTEGNIGKLDNFHPTTKEEYTEFADLLTKKITFYKAKDEFPGFIDDLVKNILVQMSSADIRRIKLTVDNLYIEKQKAEKNDKTKKATKGKGKAKLKLEGDNAHLNQYESYGNFDDDYDDFI.

Residues 1–94 (MDVSWDADNF…EKTAEEMTPE (94 aa)) are disordered. Over residues 26-45 (GEDEDDNVKESWEDEEEEKK) the composition is skewed to acidic residues. Residues 61-118 (KKKIHDKIAERERQEREKAERLVTEKTAEEMTPEQKLAEKLRQQKLQEESDLRLAMET) are a coiled coil. A compositionally biased stretch (basic and acidic residues) spans 66 to 89 (DKIAERERQEREKAERLVTEKTAE).

This sequence belongs to the eIF-3 subunit J family. As to quaternary structure, component of the eukaryotic translation initiation factor 3 (eIF-3) complex.

Its subcellular location is the cytoplasm. Functionally, component of the eukaryotic translation initiation factor 3 (eIF-3) complex, which is involved in protein synthesis of a specialized repertoire of mRNAs and, together with other initiation factors, stimulates binding of mRNA and methionyl-tRNAi to the 40S ribosome. The eIF-3 complex specifically targets and initiates translation of a subset of mRNAs involved in cell proliferation. This Bombyx mori (Silk moth) protein is Eukaryotic translation initiation factor 3 subunit J.